A 29-amino-acid chain; its full sequence is Lambda-theraphotoxin-Ec2a (29 aa).

3 disulfides stabilise this stretch: Cys-2/Cys-16, Cys-9/Cys-21, and Cys-15/Cys-25.

The protein belongs to the neurotoxin 30 (phrixotoxin) family. In terms of tissue distribution, expressed by the venom gland.

It localises to the secreted. Functionally, insect-selective neurotoxin that potently blocks insect calcium-activated potassium (BKCa) channels (Slo-type) in cockroach dorsal unpaired median (DUM) neurons (IC(50)=3.7 nM). This occurs in the absence of any shifts in the voltage dependence of activation. At high concentrations (330 nM), it partially inhibits cockroach delayed-rectifier potassium channels (Kv) currents. May interact with the turret and/or loop region of the external entrance to the channel and does not project deeply into the pore of the channel. In vivo, does not show toxicity in mice after intracerebroventricular injection of up to 25 pmol/g (1.8 ug/20 g mouse). This chain is Lambda-theraphotoxin-Ec2a, found in Eucratoscelus constrictus (African red-rump baboon spider).